We begin with the raw amino-acid sequence, 153 residues long: 3-hydroxyacyl-[acyl-carrier-protein] dehydratase FabZ (153 aa).

His-54 is a catalytic residue.

It belongs to the thioester dehydratase family. FabZ subfamily.

The protein resides in the cytoplasm. The catalysed reaction is a (3R)-hydroxyacyl-[ACP] = a (2E)-enoyl-[ACP] + H2O. In terms of biological role, involved in unsaturated fatty acids biosynthesis. Catalyzes the dehydration of short chain beta-hydroxyacyl-ACPs and long chain saturated and unsaturated beta-hydroxyacyl-ACPs. The protein is 3-hydroxyacyl-[acyl-carrier-protein] dehydratase FabZ of Shewanella denitrificans (strain OS217 / ATCC BAA-1090 / DSM 15013).